The primary structure comprises 316 residues: Acetyl-coenzyme A carboxylase carboxyl transferase subunit alpha (316 aa).

The CoA carboxyltransferase C-terminal domain occupies 35–292; that stretch reads EIEILSQKLE…KTYVLQELKD (258 aa).

This sequence belongs to the AccA family. Acetyl-CoA carboxylase is a heterohexamer composed of biotin carboxyl carrier protein (AccB), biotin carboxylase (AccC) and two subunits each of ACCase subunit alpha (AccA) and ACCase subunit beta (AccD).

The protein resides in the cytoplasm. The catalysed reaction is N(6)-carboxybiotinyl-L-lysyl-[protein] + acetyl-CoA = N(6)-biotinyl-L-lysyl-[protein] + malonyl-CoA. The protein operates within lipid metabolism; malonyl-CoA biosynthesis; malonyl-CoA from acetyl-CoA: step 1/1. Component of the acetyl coenzyme A carboxylase (ACC) complex. First, biotin carboxylase catalyzes the carboxylation of biotin on its carrier protein (BCCP) and then the CO(2) group is transferred by the carboxyltransferase to acetyl-CoA to form malonyl-CoA. This chain is Acetyl-coenzyme A carboxylase carboxyl transferase subunit alpha, found in Alkaliphilus oremlandii (strain OhILAs) (Clostridium oremlandii (strain OhILAs)).